Here is a 435-residue protein sequence, read N- to C-terminus: Nucleoredoxin (435 aa).

Serine 2 carries the N-acetylserine modification. A Thioredoxin domain is found at proline 167–valine 321.

The protein belongs to the nucleoredoxin family. Associates with the phosphatase 2A holoenzyme. Interacts with PPP2CA; the interaction is direct. Interacts with DVL1 (via PDZ domain); the interaction is direct and regulated by oxidative stress.

It localises to the cytoplasm. Its subcellular location is the cytosol. The protein localises to the nucleus. It carries out the reaction [protein]-dithiol + NAD(+) = [protein]-disulfide + NADH + H(+). The enzyme catalyses [protein]-dithiol + NADP(+) = [protein]-disulfide + NADPH + H(+). Functions as a redox-dependent negative regulator of the Wnt signaling pathway, possibly by preventing ubiquitination of DVL3 by the BCR(KLHL12) complex. May also function as a transcriptional regulator act as a regulator of protein phosphatase 2A (PP2A). The polypeptide is Nucleoredoxin (NXN) (Bos taurus (Bovine)).